The sequence spans 475 residues: Aspartyl/glutamyl-tRNA(Asn/Gln) amidotransferase subunit B (475 aa).

This sequence belongs to the GatB/GatE family. GatB subfamily. In terms of assembly, heterotrimer of A, B and C subunits.

The catalysed reaction is L-glutamyl-tRNA(Gln) + L-glutamine + ATP + H2O = L-glutaminyl-tRNA(Gln) + L-glutamate + ADP + phosphate + H(+). It carries out the reaction L-aspartyl-tRNA(Asn) + L-glutamine + ATP + H2O = L-asparaginyl-tRNA(Asn) + L-glutamate + ADP + phosphate + 2 H(+). Allows the formation of correctly charged Asn-tRNA(Asn) or Gln-tRNA(Gln) through the transamidation of misacylated Asp-tRNA(Asn) or Glu-tRNA(Gln) in organisms which lack either or both of asparaginyl-tRNA or glutaminyl-tRNA synthetases. The reaction takes place in the presence of glutamine and ATP through an activated phospho-Asp-tRNA(Asn) or phospho-Glu-tRNA(Gln). The chain is Aspartyl/glutamyl-tRNA(Asn/Gln) amidotransferase subunit B from Staphylococcus carnosus (strain TM300).